The following is a 211-amino-acid chain: Thiamine-phosphate synthase (211 aa).

Residues 37–41 and Asn-69 contribute to the 4-amino-2-methyl-5-(diphosphooxymethyl)pyrimidine site; that span reads QLRIK. Asp-70 and Asp-89 together coordinate Mg(2+). Ser-108 contacts 4-amino-2-methyl-5-(diphosphooxymethyl)pyrimidine. 134-136 lines the 2-[(2R,5Z)-2-carboxy-4-methylthiazol-5(2H)-ylidene]ethyl phosphate pocket; it reads TQT. Lys-137 contacts 4-amino-2-methyl-5-(diphosphooxymethyl)pyrimidine. Residues Gly-166 and 186–187 contribute to the 2-[(2R,5Z)-2-carboxy-4-methylthiazol-5(2H)-ylidene]ethyl phosphate site; that span reads VS.

It belongs to the thiamine-phosphate synthase family. Mg(2+) serves as cofactor.

It carries out the reaction 2-[(2R,5Z)-2-carboxy-4-methylthiazol-5(2H)-ylidene]ethyl phosphate + 4-amino-2-methyl-5-(diphosphooxymethyl)pyrimidine + 2 H(+) = thiamine phosphate + CO2 + diphosphate. The enzyme catalyses 2-(2-carboxy-4-methylthiazol-5-yl)ethyl phosphate + 4-amino-2-methyl-5-(diphosphooxymethyl)pyrimidine + 2 H(+) = thiamine phosphate + CO2 + diphosphate. It catalyses the reaction 4-methyl-5-(2-phosphooxyethyl)-thiazole + 4-amino-2-methyl-5-(diphosphooxymethyl)pyrimidine + H(+) = thiamine phosphate + diphosphate. The protein operates within cofactor biosynthesis; thiamine diphosphate biosynthesis; thiamine phosphate from 4-amino-2-methyl-5-diphosphomethylpyrimidine and 4-methyl-5-(2-phosphoethyl)-thiazole: step 1/1. In terms of biological role, condenses 4-methyl-5-(beta-hydroxyethyl)thiazole monophosphate (THZ-P) and 2-methyl-4-amino-5-hydroxymethyl pyrimidine pyrophosphate (HMP-PP) to form thiamine monophosphate (TMP). This Salmonella agona (strain SL483) protein is Thiamine-phosphate synthase.